We begin with the raw amino-acid sequence, 264 residues long: Probable glycerol uptake facilitator protein (264 aa).

2 helical membrane-spanning segments follow: residues 13–33 and 51–71; these read WIGAEFLGTFFLILSGNGAGS and TAAFAWGIAVLVGVLIANSLF. The short motif at 78-80 is the NPA 1 element; sequence NPA. 3 helical membrane-spanning segments follow: residues 104 to 124, 162 to 182, and 195 to 215; these read IPLLWVALLLAWVAQFAGAML, FATEFVATSVLIASLLVAGSF, and VPMLVVTGLIMSFGAATGTAI. Positions 216–218 match the NPA 2 motif; the sequence is NPA. The chain crosses the membrane as a helical span at residues 244-264; it reads IPVAAPLSASVILGVLVAVIV.

It belongs to the MIP/aquaporin (TC 1.A.8) family.

It is found in the cell membrane. The enzyme catalyses glycerol(in) = glycerol(out). In terms of biological role, mediates glycerol diffusion across the cytoplasmic membrane via a pore-type mechanism. This Mycoplasma pneumoniae (strain ATCC 29342 / M129 / Subtype 1) (Mycoplasmoides pneumoniae) protein is Probable glycerol uptake facilitator protein (glpF).